Here is a 785-residue protein sequence, read N- to C-terminus: MNVYVQRDDVGLGQIHRFRIFVQSGGNLHSATSSTTVPPTVNLNSVTKKESGSIEDRAGSGGMTISSGENISKQISENNSSTNPKHANSESSPLLSSDFSSSSKDYHKVGAFTDNTNAINIPEQTRGVSHTSSSPSVGTSFSSINLREVKNPLAGSDSTAPFINSTNSVLWIRVRNREARFRQAAYLQGPFTLCVSVWNDQFFDEKNSLLNFDPQVQPSTSFWVCVPYSCFSNQQPIYIEIASQAIFKDRSINFELAISQSQHSIRAMSAADIDTLHAFPALHVEHQTPENLWRLPYSSFHSKNSHLVVLTHGMHSNVGADMEYLKEKLIESSKSVKELVVVRGFTGNYCQTEKGVRWLGKRLGEWLLDITGWGSASFPRYSHISVVAHSLGGLVQTYAVGYVHAKTHGAFFQAIHPVFFVTLATPWLGVAGEHPSYIGKALSYGIIGKTGQDLSLTPLNHSIESRPFLVLMSDPSTPFFQAVSFFEKRILFANTTNDYIVPFGTSAMEVSSLGKVEEAEGSDKVMPTHMENGISPTLKENEQTVQSVGDNAKKIHASSEESGSSFSKALKSFVGLFSYSASKTTDTEIPLVKNEDENARKPTEPNCLGSDELDVSNSSNQFFCSAPKLDPTSTFSGVAQRVVNTFTNLFIPAVPTDSYFFKYHLHKVVVSDNVHDPAASFSTFDGITELNNMNNGFLSNEITIAKNWHRLAWRKVAVRLDGDAHNTMIVRRRFPNAYGWTVIKHLTEILFEQNTSTAYMNPISFDETTTAAWLSEIYEDNSISV.

Disordered stretches follow at residues 29–99 (HSAT…SSDF) and 115–140 (NTNA…VGTS). Residues 32–41 (TSSTTVPPTV) are compositionally biased toward low complexity. Positions 47–58 (TKKESGSIEDRA) are enriched in basic and acidic residues. Polar residues predominate over residues 63 to 86 (MTISSGENISKQISENNSSTNPKH). 2 stretches are compositionally biased toward low complexity: residues 89-99 (SESSPLLSSDF) and 127-140 (GVSH…VGTS). Ser390 serves as the catalytic Charge relay system.

This sequence belongs to the putative lipase ROG1 family.

The polypeptide is Putative lipase C4A8.10 (Schizosaccharomyces pombe (strain 972 / ATCC 24843) (Fission yeast)).